The sequence spans 727 residues: Elongation factor 2 (727 aa).

Positions aspartate 19–valine 260 constitute a tr-type G domain. GTP contacts are provided by residues alanine 28–threonine 35, aspartate 94–histidine 98, and asparagine 148–aspartate 151. Histidine 603 bears the Diphthamide mark.

This sequence belongs to the TRAFAC class translation factor GTPase superfamily. Classic translation factor GTPase family. EF-G/EF-2 subfamily.

The protein resides in the cytoplasm. Its function is as follows. Catalyzes the GTP-dependent ribosomal translocation step during translation elongation. During this step, the ribosome changes from the pre-translocational (PRE) to the post-translocational (POST) state as the newly formed A-site-bound peptidyl-tRNA and P-site-bound deacylated tRNA move to the P and E sites, respectively. Catalyzes the coordinated movement of the two tRNA molecules, the mRNA and conformational changes in the ribosome. This Methanococcus aeolicus (strain ATCC BAA-1280 / DSM 17508 / OCM 812 / Nankai-3) protein is Elongation factor 2.